The chain runs to 246 residues: B-cell receptor-associated protein 31 (246 aa).

Residues 2–6 (SLQWT) lie on the Lumenal side of the membrane. The helical transmembrane segment at 7-27 (AVATFLYAEVFVVLLLCIPFI) threads the bilayer. Over 28-43 (SPKRWQKIFKSRLVEL) the chain is Cytoplasmic. A helical membrane pass occupies residues 44–64 (LVSYGNTFFVVLIVILVLLVI). The Lumenal segment spans residues 65–102 (DAVREIRKYDDVTEKVNLQNNPGAMEHFHMKLFRAQRN). The helical transmembrane segment at 103-123 (LYIAGFSLLLSFLLRRLVTLI) threads the bilayer. The Cytoplasmic segment spans residues 124–246 (SQQATLLASN…VDGPMDKKEE (123 aa)). Positions 165–237 (GGKLDVGNAE…EEHAKLQAAV (73 aa)) form a coiled coil. The Di-lysine motif motif lies at 243–246 (KKEE).

The protein belongs to the BCAP29/BCAP31 family. As to quaternary structure, homodimer and heterodimer with BCAP29. Binds CASP8 (isoform 9) as a complex containing BCAP31, BCAP29, BCL2 and/or BCL2L1. Forms a complex (via C-terminus) with TOMM40 which mediates the translocation of components of the mitochondrial membrane respiratory chain NADH dehydrogenase (Complex I) from the cytosol to the mitochondria; within the complex BCAP31 interacts directly with unprocessed and processed NDUFS4 and NDUFB11. Interacts with VDAC1. Interacts with VAMP3, VAMP1 and membrane IgD immunoglobulins. Interacts with HACD2. Interacts with DNM1L; may form part of a larger protein complex at the endoplasmic reticulum-mitochondrial interface during mitochondrial fission. In terms of assembly, (Microbial infection) Interacts (via C-terminus) with HRSV membrane protein SH; this interaction is direct. In terms of processing, cleaved by CASP8 and other caspases. As to expression, ubiquitous. Highly expressed in neurons and discrete endocrine cells.

The protein localises to the endoplasmic reticulum membrane. Its subcellular location is the endoplasmic reticulum-Golgi intermediate compartment membrane. In terms of biological role, functions as a chaperone protein. Is one of the most abundant endoplasmic reticulum (ER) proteins. Plays a role in the export of secreted proteins in the ER, the recognition of abnormally folded protein and their targeting to the ER associated-degradation (ERAD). Also serves as a cargo receptor for the export of transmembrane proteins. Plays a role in the assembly of the mitochondrial membrane respiratory chain NADH dehydrogenase (Complex I) by stimulating the translocation of NDUFS4 and NDUFB11 from the cytosol to the mitochondria via interaction with TOMM40. In response to ER stress, delocalizes from the ER-mitochondria contact sites and binds BCL2. May be involved in CASP8-mediated apoptosis. This chain is B-cell receptor-associated protein 31, found in Homo sapiens (Human).